Consider the following 325-residue polypeptide: Beta-ketoacyl-[acyl-carrier-protein] synthase III (325 aa).

Catalysis depends on residues C116 and H252. An ACP-binding region spans residues Q253–R257. Residue N282 is part of the active site.

Belongs to the thiolase-like superfamily. FabH family. Homodimer.

It localises to the cytoplasm. The catalysed reaction is malonyl-[ACP] + acetyl-CoA + H(+) = 3-oxobutanoyl-[ACP] + CO2 + CoA. The protein operates within lipid metabolism; fatty acid biosynthesis. Its function is as follows. Catalyzes the condensation reaction of fatty acid synthesis by the addition to an acyl acceptor of two carbons from malonyl-ACP. Catalyzes the first condensation reaction which initiates fatty acid synthesis and may therefore play a role in governing the total rate of fatty acid production. Possesses both acetoacetyl-ACP synthase and acetyl transacylase activities. Its substrate specificity determines the biosynthesis of branched-chain and/or straight-chain of fatty acids. The protein is Beta-ketoacyl-[acyl-carrier-protein] synthase III of Xanthomonas axonopodis pv. citri (strain 306).